We begin with the raw amino-acid sequence, 388 residues long: LIM/homeobox protein Lhx9 (388 aa).

LIM zinc-binding domains are found at residues 69 to 130 (ISDR…CHLG) and 131 to 193 (ISAS…LSYT). 3 disordered regions span residues 239-263 (ENEA…RMRT), 321-356 (ENGG…LTDL), and 369-388 (SNMD…TNLF). A DNA-binding region (homeobox) is located at residues 267-326 (HHQLRTMKSYFAINHNPDAKDLKQLAQKTGLTKRVLQVWFQNARAKFRRNLLRQENGGVD). Over residues 344–356 (LTPPGTATTLTDL) the composition is skewed to low complexity. The segment covering 376–388 (SGSPSQTTLTNLF) has biased composition (polar residues).

In terms of assembly, interacts with LDB1 and LDB2.

It is found in the nucleus. Involved in gonadal development. This Rattus norvegicus (Rat) protein is LIM/homeobox protein Lhx9 (Lhx9).